Reading from the N-terminus, the 447-residue chain is Argininosuccinate synthase (447 aa).

ATP is bound by residues 17 to 25 and A43; that span reads AFSGGLDTS. Residue Y99 coordinates L-citrulline. Residues G129 and T131 each contribute to the ATP site. T131, N135, and D136 together coordinate L-aspartate. N135 contacts L-citrulline. D136 lines the ATP pocket. 2 residues coordinate L-citrulline: R139 and S192. D194 provides a ligand contact to ATP. Positions 201, 203, and 280 each coordinate L-citrulline.

This sequence belongs to the argininosuccinate synthase family. Type 2 subfamily. As to quaternary structure, homotetramer.

It is found in the cytoplasm. The enzyme catalyses L-citrulline + L-aspartate + ATP = 2-(N(omega)-L-arginino)succinate + AMP + diphosphate + H(+). Its pathway is amino-acid biosynthesis; L-arginine biosynthesis; L-arginine from L-ornithine and carbamoyl phosphate: step 2/3. This chain is Argininosuccinate synthase, found in Escherichia fergusonii (strain ATCC 35469 / DSM 13698 / CCUG 18766 / IAM 14443 / JCM 21226 / LMG 7866 / NBRC 102419 / NCTC 12128 / CDC 0568-73).